A 485-amino-acid chain; its full sequence is Hexokinase (485 aa).

S15 is modified (phosphoserine). The Hexokinase domain occupies A21–C468. A hexokinase small subdomain region spans residues T75 to I208. K111 lines the ATP pocket. Residues P151–F177 form a glucose-binding region. The hexokinase large subdomain stretch occupies residues N209 to D457.

In terms of assembly, monomer and homodimer. The monomeric form is active, the homodimeric form inactive.

The catalysed reaction is a D-hexose + ATP = a D-hexose 6-phosphate + ADP + H(+). It carries out the reaction D-fructose + ATP = D-fructose 6-phosphate + ADP + H(+). The enzyme catalyses D-glucose + ATP = D-glucose 6-phosphate + ADP + H(+). It functions in the pathway carbohydrate metabolism; hexose metabolism. It participates in carbohydrate degradation; glycolysis; D-glyceraldehyde 3-phosphate and glycerone phosphate from D-glucose: step 1/4. In terms of biological role, catalyzes the phosphorylation of hexose, such as D-glucose and D-fructose, to hexose 6-phosphate (D-glucose 6-phosphate and D-fructose 6-phosphate, respectively). Has higher affinity for D-glucose. Mediates the initial step of glycolysis by catalyzing phosphorylation of D-glucose to D-glucose 6-phosphate. This chain is Hexokinase (RAG5), found in Kluyveromyces lactis (strain ATCC 8585 / CBS 2359 / DSM 70799 / NBRC 1267 / NRRL Y-1140 / WM37) (Yeast).